Reading from the N-terminus, the 106-residue chain is PAT complex subunit Asterix (106 aa).

Positions 1–29 (MSTNNMSDPRRPNKVLRYKPPPSECNPAL) are disordered. Position 2 is an N-acetylserine (serine 2). Topologically, residues 2–32 (STNNMSDPRRPNKVLRYKPPPSECNPALDDP) are cytoplasmic. Residues 33–51 (TPDYMNLLGMIFSMCGLML) form a helical membrane-spanning segment. Residue lysine 52 is a topological domain, lumenal. Residues 53–70 (LKWCAWVAVYCSFISFAN) traverse the membrane as a helical segment. Topologically, residues 71-74 (SRSS) are cytoplasmic. The chain crosses the membrane as a helical span at residues 75-95 (EDTKQMMSSFMLSISAVVMSY). The Lumenal portion of the chain corresponds to 96-106 (LQNPQPMTPPW).

This sequence belongs to the Asterix family. In terms of assembly, component of the PAT complex, composed of WDR83OS/Asterix and CCDC47. The PAT complex is part of the multi-pass translocon (MPT) complex, composed of three subcomplexes, the GEL complex (composed of RAB5IF/OPTI and TMCO1), the BOS complex (composed of NCLN/Nicalin, NOMO1 and TMEM147) and the PAT complex (composed of WDR83OS/Asterix and CCDC47). The MPT complex associates with the SEC61 complex.

The protein resides in the endoplasmic reticulum membrane. In terms of biological role, component of the multi-pass translocon (MPT) complex that mediates insertion of multi-pass membrane proteins into the lipid bilayer of membranes. The MPT complex takes over after the SEC61 complex: following membrane insertion of the first few transmembrane segments of proteins by the SEC61 complex, the MPT complex occludes the lateral gate of the SEC61 complex to promote insertion of subsequent transmembrane regions. Within the MPT complex, the PAT subcomplex sequesters any highly polar regions in the transmembrane domains away from the non-polar membrane environment until they can be buried in the interior of the fully assembled protein. Within the PAT subcomplex, WDR83OS/Asterix binds to and redirects the substrate to a location behind the SEC61 complex. This Canis lupus familiaris (Dog) protein is PAT complex subunit Asterix (WDR83OS).